The following is a 718-amino-acid chain: Exostosin-2 (718 aa).

The Cytoplasmic portion of the chain corresponds to 1–25 (MCASVKYNIRGPALIPRMKTKHRIY). Residues 26–46 (YITLFSIVLLGLIATGMFQFW) traverse the membrane as a helical; Signal-anchor for type II membrane protein segment. The Lumenal segment spans residues 47 to 718 (PHSIESSGDW…LKSFPNIGSL (672 aa)). 4 disulfides stabilise this stretch: cysteine 85-cysteine 90, cysteine 96-cysteine 151, cysteine 286-cysteine 300, and cysteine 318-cysteine 339. N-linked (GlcNAc...) asparagine glycosylation occurs at asparagine 288. Leucine 461, arginine 465, asparagine 490, and asparagine 517 together coordinate UDP. UDP-N-acetyl-alpha-D-glucosamine is bound by residues arginine 465, asparagine 490, asparagine 517, arginine 522, aspartate 538, aspartate 539, and aspartate 540. Residues aspartate 538 and aspartate 539 each coordinate UDP. Aspartate 540 is a Mn(2+) binding site. A protein-binding residues include tyrosine 582 and serine 584. An intrachain disulfide couples cysteine 626 to cysteine 676. Residues glutamate 627 and aspartate 628 each coordinate UDP-N-acetyl-alpha-D-glucosamine. N-linked (GlcNAc...) asparagine glycosylation occurs at asparagine 637. A protein contacts are provided by lysine 651 and lysine 653. Arginine 673 lines the UDP-N-acetyl-alpha-D-glucosamine pocket.

Belongs to the glycosyltransferase 47 family. Part of the heparan sulfate polymerase, a dimeric complex composed of EXT1 and EXT2. Could also form homooligomeric complexes. Interacts with NDST1. Interacts with GALNT5. It depends on Mn(2+) as a cofactor. Post-translationally, a soluble form is generated by proteolytic processing. N-glycosylated at Asn-637.

It is found in the golgi apparatus membrane. The protein resides in the golgi apparatus. Its subcellular location is the cis-Golgi network membrane. The protein localises to the endoplasmic reticulum membrane. It localises to the secreted. The enzyme catalyses 3-O-{[(1-&gt;4)-beta-D-GlcA-(1-&gt;4)-alpha-D-GlcNAc](n)-(1-&gt;4)-beta-D-GlcA-(1-&gt;3)-beta-D-Gal-(1-&gt;3)-beta-D-Gal-(1-&gt;4)-beta-D-Xyl}-L-seryl-[protein] + UDP-N-acetyl-alpha-D-glucosamine = 3-O-{alpha-D-GlcNAc-[(1-&gt;4)-beta-D-GlcA-(1-&gt;4)-alpha-D-GlcNAc](n)-(1-&gt;4)-beta-D-GlcA-(1-&gt;3)-beta-D-Gal-(1-&gt;3)-beta-D-Gal-(1-&gt;4)-beta-D-Xyl}-L-seryl-[protein] + UDP + H(+). The protein operates within protein modification; protein glycosylation. Functionally, glycosyltransferase forming with EXT1 the heterodimeric heparan sulfate polymerase which catalyzes the elongation of the heparan sulfate glycan backbone. Glycan backbone extension consists in the alternating transfer of (1-&gt;4)-beta-D-GlcA and (1-&gt;4)-alpha-D-GlcNAc residues from their respective UDP-sugar donors. Both EXT1 and EXT2 are required for the full activity of the polymerase since EXT1 bears the N-acetylglucosaminyl-proteoglycan 4-beta-glucuronosyltransferase activity within the complex while EXT2 carries the glucuronosyl-N-acetylglucosaminyl-proteoglycan 4-alpha-N-acetylglucosaminyltransferase activity. Heparan sulfate proteoglycans are ubiquitous components of the extracellular matrix and play an important role in tissue homeostasis and signaling. The chain is Exostosin-2 from Bos taurus (Bovine).